Reading from the N-terminus, the 162-residue chain is tRNA (cytidine(34)-2'-O)-methyltransferase (162 aa).

Leucine 83, glycine 105, isoleucine 127, and serine 135 together coordinate S-adenosyl-L-methionine.

The protein belongs to the class IV-like SAM-binding methyltransferase superfamily. RNA methyltransferase TrmH family. TrmL subfamily. In terms of assembly, homodimer.

It localises to the cytoplasm. It carries out the reaction cytidine(34) in tRNA + S-adenosyl-L-methionine = 2'-O-methylcytidine(34) in tRNA + S-adenosyl-L-homocysteine + H(+). The enzyme catalyses 5-carboxymethylaminomethyluridine(34) in tRNA(Leu) + S-adenosyl-L-methionine = 5-carboxymethylaminomethyl-2'-O-methyluridine(34) in tRNA(Leu) + S-adenosyl-L-homocysteine + H(+). Functionally, methylates the ribose at the nucleotide 34 wobble position in the two leucyl isoacceptors tRNA(Leu)(CmAA) and tRNA(Leu)(cmnm5UmAA). Catalyzes the methyl transfer from S-adenosyl-L-methionine to the 2'-OH of the wobble nucleotide. In Photorhabdus asymbiotica subsp. asymbiotica (strain ATCC 43949 / 3105-77) (Xenorhabdus luminescens (strain 2)), this protein is tRNA (cytidine(34)-2'-O)-methyltransferase.